Consider the following 167-residue polypeptide: Large ribosomal subunit protein uL10 (167 aa).

This sequence belongs to the universal ribosomal protein uL10 family. In terms of assembly, part of the ribosomal stalk of the 50S ribosomal subunit. The N-terminus interacts with L11 and the large rRNA to form the base of the stalk. The C-terminus forms an elongated spine to which L12 dimers bind in a sequential fashion forming a multimeric L10(L12)X complex.

In terms of biological role, forms part of the ribosomal stalk, playing a central role in the interaction of the ribosome with GTP-bound translation factors. The chain is Large ribosomal subunit protein uL10 from Flavobacterium johnsoniae (strain ATCC 17061 / DSM 2064 / JCM 8514 / BCRC 14874 / CCUG 350202 / NBRC 14942 / NCIMB 11054 / UW101) (Cytophaga johnsonae).